The primary structure comprises 33 residues: Photosystem II reaction center protein T (33 aa).

A helical transmembrane segment spans residues 3–23 (ALVYTFLLVSTLGIIFFAIFF).

It belongs to the PsbT family. In terms of assembly, PSII is composed of 1 copy each of membrane proteins PsbA, PsbB, PsbC, PsbD, PsbE, PsbF, PsbH, PsbI, PsbJ, PsbK, PsbL, PsbM, PsbT, PsbY, PsbZ, Psb30/Ycf12, at least 3 peripheral proteins of the oxygen-evolving complex and a large number of cofactors. It forms dimeric complexes.

The protein resides in the plastid. It localises to the chloroplast thylakoid membrane. Its function is as follows. Found at the monomer-monomer interface of the photosystem II (PS II) dimer, plays a role in assembly and dimerization of PSII. PSII is a light-driven water plastoquinone oxidoreductase, using light energy to abstract electrons from H(2)O, generating a proton gradient subsequently used for ATP formation. In Asparagus officinalis (Garden asparagus), this protein is Photosystem II reaction center protein T.